The chain runs to 211 residues: Protein U63 (211 aa).

This sequence belongs to the herpesviridae UL92 family.

This chain is Protein U63 (U63), found in Human herpesvirus 7 (strain JI) (HHV-7).